The primary structure comprises 122 residues: Large ribosomal subunit protein uL14 (122 aa).

The protein belongs to the universal ribosomal protein uL14 family. Part of the 50S ribosomal subunit. Forms a cluster with proteins L3 and L19. In the 70S ribosome, L14 and L19 interact and together make contacts with the 16S rRNA in bridges B5 and B8.

Its function is as follows. Binds to 23S rRNA. Forms part of two intersubunit bridges in the 70S ribosome. The sequence is that of Large ribosomal subunit protein uL14 from Acaryochloris marina (strain MBIC 11017).